The sequence spans 78 residues: Acyl carrier protein (78 aa).

The Carrier domain maps to 2–77 (SSIEERVKKI…LAINYINENL (76 aa)). Ser37 bears the O-(pantetheine 4'-phosphoryl)serine mark.

It belongs to the acyl carrier protein (ACP) family. In terms of processing, 4'-phosphopantetheine is transferred from CoA to a specific serine of apo-ACP by AcpS. This modification is essential for activity because fatty acids are bound in thioester linkage to the sulfhydryl of the prosthetic group.

Its subcellular location is the cytoplasm. It functions in the pathway lipid metabolism; fatty acid biosynthesis. Functionally, carrier of the growing fatty acid chain in fatty acid biosynthesis. The protein is Acyl carrier protein of Saccharophagus degradans (strain 2-40 / ATCC 43961 / DSM 17024).